Reading from the N-terminus, the 208-residue chain is Large ribosomal subunit protein bL25 (208 aa).

This sequence belongs to the bacterial ribosomal protein bL25 family. CTC subfamily. Part of the 50S ribosomal subunit; part of the 5S rRNA/L5/L18/L25 subcomplex. Contacts the 5S rRNA. Binds to the 5S rRNA independently of L5 and L18.

This is one of the proteins that binds to the 5S RNA in the ribosome where it forms part of the central protuberance. The sequence is that of Large ribosomal subunit protein bL25 from Syntrophotalea carbinolica (strain DSM 2380 / NBRC 103641 / GraBd1) (Pelobacter carbinolicus).